The sequence spans 391 residues: Galactarate dehydratase (D-threo-forming) (391 aa).

Residue R15 coordinates substrate. Positions 42 and 45 each coordinate Mg(2+). Position 89 (Y89) interacts with substrate. Catalysis depends on Y90, which acts as the Proton donor. Y164 functions as the Proton acceptor in the catalytic mechanism. Residues D193, E221, and H246 each contribute to the Mg(2+) site. Residue T296 participates in substrate binding. Position 297 (T297) interacts with Mg(2+). R385 is a binding site for substrate.

The protein belongs to the mandelate racemase/muconate lactonizing enzyme family. It depends on Mg(2+) as a cofactor.

The catalysed reaction is galactarate = (2S,3R)-dihydroxy-5-oxohexanedioate + H2O. Its function is as follows. Catalyzes the regioselective dehydration of galactarate into 2-keto-D-threo-4,5-dihydroxyadipate ((2S,3R)-dihydroxy-5-oxohexanedioate). Is not active on other acid sugars. This is Galactarate dehydratase (D-threo-forming) from Oceanobacillus iheyensis (strain DSM 14371 / CIP 107618 / JCM 11309 / KCTC 3954 / HTE831).